A 625-amino-acid chain; its full sequence is Keratin, type II cytoskeletal 1 (625 aa).

The segment covering 1–12 (MSFQCSSRSLCR) has biased composition (low complexity). Residues 1-27 (MSFQCSSRSLCRSGGGGGGRNFSSGSA) form a disordered region. The tract at residues 1 to 178 (MSFQCSSRSL…DPQIQKVKSQ (178 aa)) is head. Arg-12 bears the Omega-N-methylarginine mark. Ser-23 and Ser-26 each carry phosphoserine. Arg-51 carries the omega-N-methylarginine modification. Phosphoserine is present on Ser-69. The stretch at 171–319 (QIQKVKSQER…DIDFFSTLYQ (149 aa)) forms a coiled coil. Residues 179-214 (EREQIKSLNDKFASFIDKVRFLEQQNQVLQTKWELL) are coil 1A. The 314-residue stretch at 179 to 492 (EREQIKSLND…KLLEGEEIRM (314 aa)) folds into the IF rod domain. Residues 215-233 (QQVDTSTRTQNLDPFFESY) are linker 1. The tract at residues 234-325 (ISNLRRQVDS…TLYQMELSQM (92 aa)) is coil 1B. Lys-275 bears the N6,N6-dimethyllysine mark. A linker 12 region spans residues 326–349 (QTQISETNVVLSMDNNRTLDLDGI). The segment at 350 to 488 (IAEVKAQYDS…ATYRKLLEGE (139 aa)) is coil 2. Positions 388–475 (DSVKNTKMEI…ELMNTKLALD (88 aa)) form a coiled coil. The tract at residues 489–625 (EIRMSGECTP…VSTTYSRGTN (137 aa)) is tail. Disordered regions lie at residues 496–525 (CTPN…YGSG) and 560–625 (SGGG…RGTN). A compositionally biased stretch (low complexity) spans 500–515 (VSVSVSTSHTSMSGTS). Gly residues-rich tracts occupy residues 516–525 (SRGGGRYGSG) and 560–606 (SGGG…GGVK). Omega-N-methylarginine occurs at positions 517, 574, and 596. Residues 613-625 (VKFVSTTYSRGTN) are compositionally biased toward polar residues.

The protein belongs to the intermediate filament family. In terms of assembly, heterotetramer of two type I and two type II keratins. Heterodimer with KRT10. Two heterodimers of KRT1 and KRT10 form a heterotetramer. Forms a heterodimer with KRT14; the interaction is more abundant in the absence of KRT5. Interacts with ITGB1 in the presence of RACK1 and SRC, and with RACK1. Interacts with C1QBP; the association represents a cell surface kininogen receptor. Interacts with EPPK1; interaction is dependent of higher-order structure of intermediate filament. Post-translationally, undergoes deimination of some arginine residues (citrullination).

Its subcellular location is the cell membrane. It localises to the cytoplasm. Functionally, may regulate the activity of kinases such as PKC and SRC via binding to integrin beta-1 (ITB1) and the receptor of activated protein C kinase 1 (RACK1). In complex with C1QBP is a high affinity receptor for kininogen-1/HMWK. The polypeptide is Keratin, type II cytoskeletal 1 (Rattus norvegicus (Rat)).